The chain runs to 199 residues: 7-methyl-GTP pyrophosphatase (199 aa).

The active-site Proton acceptor is the Asp76.

Belongs to the Maf family. YceF subfamily. A divalent metal cation serves as cofactor.

It is found in the cytoplasm. It carries out the reaction N(7)-methyl-GTP + H2O = N(7)-methyl-GMP + diphosphate + H(+). In terms of biological role, nucleoside triphosphate pyrophosphatase that hydrolyzes 7-methyl-GTP (m(7)GTP). May have a dual role in cell division arrest and in preventing the incorporation of modified nucleotides into cellular nucleic acids. This chain is 7-methyl-GTP pyrophosphatase (maf-2), found in Brucella suis biovar 1 (strain 1330).